The sequence spans 196 residues: Probable malonic semialdehyde reductase RutE (196 aa).

The protein belongs to the nitroreductase family. HadB/RutE subfamily. The cofactor is FMN.

The enzyme catalyses 3-hydroxypropanoate + NADP(+) = 3-oxopropanoate + NADPH + H(+). Its function is as follows. May reduce toxic product malonic semialdehyde to 3-hydroxypropionic acid, which is excreted. The chain is Probable malonic semialdehyde reductase RutE from Escherichia coli O8 (strain IAI1).